Consider the following 239-residue polypeptide: Probable transcriptional regulatory protein BCG9842_B4761 (239 aa).

Belongs to the TACO1 family. YeeN subfamily.

It is found in the cytoplasm. This is Probable transcriptional regulatory protein BCG9842_B4761 from Bacillus cereus (strain G9842).